Reading from the N-terminus, the 238-residue chain is Alpha-tubulin N-acetyltransferase (238 aa).

Residues 1–196 (MEFDFDISQS…NNFVVFEDLF (196 aa)) form the N-acetyltransferase domain. Residues 129 to 142 (FYVHESQQRTGNGK) and 165 to 174 (SFKFLSFLQK) contribute to the acetyl-CoA site.

It belongs to the acetyltransferase ATAT1 family.

It catalyses the reaction L-lysyl-[alpha-tubulin] + acetyl-CoA = N(6)-acetyl-L-lysyl-[alpha-tubulin] + CoA + H(+). In terms of biological role, specifically acetylates 'Lys-40' in alpha-tubulin on the lumenal side of microtubules. Promotes microtubule destabilization and accelerates microtubule dynamics; this activity may be independent of acetylation activity. Acetylates alpha-tubulin with a slow enzymatic rate, due to a catalytic site that is not optimized for acetyl transfer. Enters the microtubule through each end and diffuses quickly throughout the lumen of microtubules. Acetylates only long/old microtubules because of its slow acetylation rate since it does not have time to act on dynamically unstable microtubules before the enzyme is released. In Trichoplax adhaerens (Trichoplax reptans), this protein is Alpha-tubulin N-acetyltransferase.